Consider the following 210-residue polypeptide: Phosphoenolpyruvate guanylyltransferase (210 aa).

Positions 130, 146, and 149 each coordinate phosphoenolpyruvate.

Belongs to the CofC family.

The catalysed reaction is phosphoenolpyruvate + GTP + H(+) = enolpyruvoyl-2-diphospho-5'-guanosine + diphosphate. Its pathway is cofactor biosynthesis; coenzyme F420 biosynthesis. In terms of biological role, guanylyltransferase that catalyzes the activation of phosphoenolpyruvate (PEP) as enolpyruvoyl-2-diphospho-5'-guanosine, via the condensation of PEP with GTP. It is involved in the biosynthesis of coenzyme F420, a hydride carrier cofactor. This is Phosphoenolpyruvate guanylyltransferase from Roseiflexus castenholzii (strain DSM 13941 / HLO8).